A 185-amino-acid chain; its full sequence is Elongation factor P (185 aa).

Belongs to the elongation factor P family.

It is found in the cytoplasm. It functions in the pathway protein biosynthesis; polypeptide chain elongation. Functionally, involved in peptide bond synthesis. Stimulates efficient translation and peptide-bond synthesis on native or reconstituted 70S ribosomes in vitro. Probably functions indirectly by altering the affinity of the ribosome for aminoacyl-tRNA, thus increasing their reactivity as acceptors for peptidyl transferase. The protein is Elongation factor P of Paraburkholderia phymatum (strain DSM 17167 / CIP 108236 / LMG 21445 / STM815) (Burkholderia phymatum).